We begin with the raw amino-acid sequence, 506 residues long: Aminoaldehyde dehydrogenase 2 (506 aa).

Asp-101 serves as a coordination point for Na(+). Residues 161–163 (TPW) and 187–190 (KPSE) each bind NAD(+). Leu-191 is a Na(+) binding site. NAD(+) contacts are provided by residues 241-244 (STET) and Glu-262. Glu-262 acts as the Proton acceptor in catalysis. The Nucleophile role is filled by Cys-297. Glu-396 and Trp-462 together coordinate NAD(+).

This sequence belongs to the aldehyde dehydrogenase family.

The enzyme catalyses 4-aminobutanal + NAD(+) + H2O = 4-aminobutanoate + NADH + 2 H(+). It catalyses the reaction 3-aminopropanal + NAD(+) + H2O = beta-alanine + NADH + 2 H(+). It carries out the reaction 4-(trimethylamino)butanal + NAD(+) + H2O = 4-(trimethylamino)butanoate + NADH + 2 H(+). The catalysed reaction is 4-guanidinobutanal + NAD(+) + H2O = 4-guanidinobutanoate + NADH + 2 H(+). It functions in the pathway amine and polyamine biosynthesis; betaine biosynthesis via choline pathway; betaine from betaine aldehyde: step 1/1. In terms of biological role, dehydrogenase that catalyzes the oxidation of several aminoaldehydes. Metabolizes and detoxifies aldehyde products of polyamine degradation to non-toxic amino acids. Catalyzes the oxidation of 4-aminobutanal and 3-aminopropanal to 4-aminobutanoate and beta-alanine, respectively. Catalyzes the oxidation of 4-(trimethylamino)butanal and 4-guanidinobutanal to 4-trimethylammoniobutanoate and 4-guanidinobutanoate, respectively. The protein is Aminoaldehyde dehydrogenase 2 of Zea mays (Maize).